A 313-amino-acid polypeptide reads, in one-letter code: Uracil-DNA glycosylase (313 aa).

Residues 1 to 12 show a composition bias toward polar residues; that stretch reads MIGQKTLYSFFS. An interaction with FAM72A region spans residues 1–25; that stretch reads MIGQKTLYSFFSPSPARKRHAPSPE. The interval 1-29 is mitochondrial localization signal; the sequence is MIGQKTLYSFFSPSPARKRHAPSPEPAVQ. A disordered region spans residues 1–68; that stretch reads MIGQKTLYSF…GTPPSSPLSA (68 aa). Ser-12 and Ser-14 each carry phosphoserine. The Important for nuclear sorting signature appears at 17–19; sequence RKR. Phosphoserine is present on Ser-23. A compositionally biased stretch (low complexity) spans 43–53; it reads AAAIPAKKAPA. The residue at position 60 (Thr-60) is a Phosphothreonine. Ser-64 is modified (phosphoserine). The tract at residues 73 to 88 is interaction with RPA2; that stretch reads RIQRNKAAALLRLAAR. Gln-153 serves as a coordination point for uracil. Asp-154 serves as the catalytic Proton acceptor. His-157 provides a ligand contact to dsDNA. Residue Phe-167 participates in uracil binding. Ser-178 is a dsDNA binding site. Asn-213 is a uracil binding site. The dsDNA site is built by Ser-256, His-277, Ser-279, Ser-282, and Arg-285. A uracil-binding site is contributed by His-277. Lys-295 bears the N6-acetyllysine mark.

Belongs to the uracil-DNA glycosylase (UDG) superfamily. UNG family. Monomer. As to quaternary structure, interacts with RPA2 subunit of the RPA trimer; this interaction mediates UNG2 recruitment to RPA-coated single-stranded DNA at stalled replication forks. Interacts with PCNA; this interaction mediates UNG2 recruitment to S-phase replication foci. Interacts (via N-terminus) with FAM72A. In terms of assembly, (Microbial infection) Interacts with HIV-1 Vpr. In terms of processing, processed by mitochondrial serine or cysteine peptidases to yield a mature dominant form that lacks N-terminal 29 amino acid residues and another minor form that lacks N-terminal 77 amino acid residues. The catalytic activity of UNG1 delta29 is not product-inhibited by AP sites.

It localises to the mitochondrion. It is found in the nucleus. The catalysed reaction is Hydrolyzes single-stranded DNA or mismatched double-stranded DNA and polynucleotides, releasing free uracil.. It catalyses the reaction a 2'-deoxyuridine in single-stranded DNA + H2O = a 2'-deoxyribose 5'-monophosphate in single-stranded DNA + uracil. The enzyme catalyses a 2'-deoxyuridine in double-stranded DNA + H2O = a 2'-deoxyribose 5'-monophosphate in double-stranded DNA + uracil. Functionally, uracil-DNA glycosylase that hydrolyzes the N-glycosidic bond between uracil and deoxyribose in single- and double-stranded DNA (ssDNA and dsDNA) to release a free uracil residue and form an abasic (apurinic/apyrimidinic; AP) site. Excises uracil residues arising as a result of misincorporation of dUMP residues by DNA polymerase during replication or due to spontaneous or enzymatic deamination of cytosine. Mediates error-free base excision repair (BER) of uracil at replication forks. According to the model, it is recruited by PCNA to S-phase replication forks to remove misincorporated uracil at U:A base mispairs in nascent DNA strands. Via trimeric RPA it is recruited to ssDNA stretches ahead of the polymerase to allow detection and excision of deaminated cytosines prior to replication. The resultant AP sites temporarily stall replication, allowing time to repair the lesion. Mediates mutagenic uracil processing involved in antibody affinity maturation. Processes AICDA-induced U:G base mispairs at variable immunoglobulin (Ig) regions leading to the generation of transversion mutations. Operates at switch sites of Ig constant regions where it mediates Ig isotype class switch recombination. Excises AICDA-induced uracil residues forming AP sites that are subsequently nicked by APEX1 endonuclease. The accumulation of staggered nicks in opposite strands results in double strand DNA breaks that are finally resolved via non-homologous end joining repair pathway. This chain is Uracil-DNA glycosylase, found in Homo sapiens (Human).